Reading from the N-terminus, the 901-residue chain is Probable dipeptidyl-aminopeptidase B (901 aa).

The span at methionine 1–threonine 22 shows a compositional bias: low complexity. The tract at residues methionine 1–glutamine 67 is disordered. The Cytoplasmic portion of the chain corresponds to methionine 1 to arginine 76. Residues leucine 77 to valine 97 form a helical; Signal-anchor for type II membrane protein membrane-spanning segment. The Vacuolar segment spans residues threonine 98–lysine 901. N-linked (GlcNAc...) asparagine glycans are attached at residues asparagine 334 and asparagine 625. Serine 739 functions as the Charge relay system in the catalytic mechanism. Asparagine 793 carries N-linked (GlcNAc...) asparagine glycosylation. Catalysis depends on charge relay system residues aspartate 816 and histidine 849.

Belongs to the peptidase S9B family.

It is found in the vacuole membrane. It catalyses the reaction Release of an N-terminal dipeptide, Xaa-Yaa-|-Zaa-, from a polypeptide, preferentially when Yaa is Pro, provided Zaa is neither Pro nor hydroxyproline.. In terms of biological role, type IV dipeptidyl-peptidase which removes N-terminal dipeptides sequentially from polypeptides having unsubstituted N-termini provided that the penultimate residue is proline. In Aspergillus niger (strain ATCC MYA-4892 / CBS 513.88 / FGSC A1513), this protein is Probable dipeptidyl-aminopeptidase B (dapB).